Reading from the N-terminus, the 358-residue chain is Transmembrane protein 144 homolog B (358 aa).

10 helical membrane passes run 6 to 26, 35 to 55, 60 to 79, 86 to 108, 122 to 142, 211 to 231, 244 to 264, 279 to 299, 307 to 327, and 337 to 357; these read VIGY…YVPV, LAFT…AMFI, IFDP…NFCV, IGIG…FTGK, PALN…FFFI, ILGI…MVPM, LSFV…VFIV, IFPS…LMVA, IGFP…SVFY, and LLIL…LALS.

Belongs to the TMEM144 family.

The protein localises to the membrane. In Dictyostelium discoideum (Social amoeba), this protein is Transmembrane protein 144 homolog B (tmem144B).